The primary structure comprises 368 residues: MTVTGIIAEFNPFHNGHKYLLETVEGLKIIAMSGNFMQRGEPALIDKWIRSEMALKNGADIVVELPFFVSVQSADYFAQGAIDILCQLGIQQLAFGTEDVIDYQKLIKVYEKKSEQMTAYLSTLEDTLSYPQKTQKMWEIFAGVKFSGQTPNHILGLSYAKASAGKHIQLCPIKRQGAAYHSKDKNHLLASASAIRQHLNDWDFISHSVPNAGLLINNPHMSWDHYFSFLKYQILNHSDLTSIFQVNDELASRIKKAIKVSQNIDHLVDTVATKRYTKARVRRILIYILVNAKEPTLPKGIHILGFTSKGQAHLKKLKKSRPLITRIGAETWDEMTQKADSIYQLGHQDIPEQSFGRIPIIIKNERLN.

ATP-binding positions include 7–20 (IAEF…HKYL), Gly96, Asn152, and Arg175.

Belongs to the TmcAL family.

It is found in the cytoplasm. The catalysed reaction is cytidine(34) in elongator tRNA(Met) + acetate + ATP = N(4)-acetylcytidine(34) in elongator tRNA(Met) + AMP + diphosphate. Its function is as follows. Catalyzes the formation of N(4)-acetylcytidine (ac(4)C) at the wobble position of elongator tRNA(Met), using acetate and ATP as substrates. First activates an acetate ion to form acetyladenylate (Ac-AMP) and then transfers the acetyl group to tRNA to form ac(4)C34. In Streptococcus pyogenes serotype M5 (strain Manfredo), this protein is tRNA(Met) cytidine acetate ligase.